Consider the following 191-residue polypeptide: Signal peptidase IB (191 aa).

Residues 1-7 (MKKELLE) lie on the Cytoplasmic side of the membrane. Residues 8 to 28 (WIISIAVAFVILFIVGKFIVT) traverse the membrane as a helical segment. The Extracellular portion of the chain corresponds to 29 to 191 (PYTIKGESMD…YNFNPENTKN (163 aa)). Active-site residues include Ser36 and Lys77.

Belongs to the peptidase S26 family.

It is found in the cell membrane. The catalysed reaction is Cleavage of hydrophobic, N-terminal signal or leader sequences from secreted and periplasmic proteins.. In terms of biological role, essential for cell viability. In Staphylococcus aureus (strain MRSA252), this protein is Signal peptidase IB (spsB).